A 107-amino-acid polypeptide reads, in one-letter code: Iron-binding protein IscA (107 aa).

Residues Cys35, Cys99, and Cys101 each contribute to the Fe cation site.

The protein belongs to the HesB/IscA family. As to quaternary structure, homodimer; may form tetramers and higher multimers. Requires Fe cation as cofactor.

Is able to transfer iron-sulfur clusters to apo-ferredoxin. Multiple cycles of [2Fe2S] cluster formation and transfer are observed, suggesting that IscA acts catalytically. Recruits intracellular free iron so as to provide iron for the assembly of transient iron-sulfur cluster in IscU in the presence of IscS, L-cysteine and the thioredoxin reductase system TrxA/TrxB. The protein is Iron-binding protein IscA of Yersinia pestis bv. Antiqua (strain Angola).